Consider the following 415-residue polypeptide: Phakinin (415 aa).

A disordered region spans residues M1–S26. The residue at position 2 (S2) is an N-acetylserine. The head stretch occupies residues S2–C114. A phosphoserine mark is found at S26, S32, and S35. T53 bears the Phosphothreonine mark. Phosphoserine is present on residues S90 and S100. Residues D104 to S415 enclose the IF rod domain. Coiled-coil stretches lie at residues L115 to A144, R199 to L248, and Q295 to K395. Residues C396 to S415 form a tail region.

Belongs to the intermediate filament family. Part of a complex required for lens intermediate filament formation composed of BFSP1, BFSP2 and CRYAA. Found in a complex composed of PPL (via C-terminal linker domain), BFSP1 and BFSP2 in the retinal lens. Within the complex interacts with PPL (via C-terminal linker domain) and with BFSP1. Identified in a complex that contains VIM, EZR, AHNAK, BFSP1, BFSP2, ANK2, PLEC, PRX and spectrin. Interacts with LGSN. Interacts with VIM. In terms of tissue distribution, abundantly expressed in both the inner and outer cortex of the retina, expressed at a lower level in the nucleus of the retina (at protein level). Detected in eye lens fiber cells (at protein level).

The protein resides in the cell membrane. The protein localises to the cytoplasm. Its subcellular location is the cytoskeleton. It is found in the cell cortex. In terms of biological role, required for the correct formation of lens intermediate filaments as part of a complex composed of BFSP1, BFSP2 and CRYAA. Plays a role in maintenance of retinal lens optical clarity. The polypeptide is Phakinin (BFSP2) (Bos taurus (Bovine)).